The primary structure comprises 300 residues: 4-hydroxy-tetrahydrodipicolinate synthase (300 aa).

Residue threonine 46 coordinates pyruvate. Tyrosine 135 serves as the catalytic Proton donor/acceptor. The Schiff-base intermediate with substrate role is filled by lysine 163. Valine 205 serves as a coordination point for pyruvate.

Belongs to the DapA family. Homotetramer; dimer of dimers.

The protein resides in the cytoplasm. The catalysed reaction is L-aspartate 4-semialdehyde + pyruvate = (2S,4S)-4-hydroxy-2,3,4,5-tetrahydrodipicolinate + H2O + H(+). It functions in the pathway amino-acid biosynthesis; L-lysine biosynthesis via DAP pathway; (S)-tetrahydrodipicolinate from L-aspartate: step 3/4. Catalyzes the condensation of (S)-aspartate-beta-semialdehyde [(S)-ASA] and pyruvate to 4-hydroxy-tetrahydrodipicolinate (HTPA). The sequence is that of 4-hydroxy-tetrahydrodipicolinate synthase from Koribacter versatilis (strain Ellin345).